Here is a 196-residue protein sequence, read N- to C-terminus: 7-methyl-GTP pyrophosphatase (196 aa).

The Proton acceptor role is filled by D72.

The protein belongs to the Maf family. YceF subfamily. A divalent metal cation is required as a cofactor.

It localises to the cytoplasm. The catalysed reaction is N(7)-methyl-GTP + H2O = N(7)-methyl-GMP + diphosphate + H(+). In terms of biological role, nucleoside triphosphate pyrophosphatase that hydrolyzes 7-methyl-GTP (m(7)GTP). May have a dual role in cell division arrest and in preventing the incorporation of modified nucleotides into cellular nucleic acids. The chain is 7-methyl-GTP pyrophosphatase from Neisseria meningitidis serogroup B (strain ATCC BAA-335 / MC58).